The following is a 621-amino-acid chain: Frizzled and smoothened-like protein H (621 aa).

The signal sequence occupies residues 1–21 (MNLKFYNLIFFISFLICCIHG). At 22–246 (QRYLPVEGGK…VWNQIFKIND (225 aa)) the chain is on the extracellular side. The FZ domain occupies 27-166 (VEGGKCEKYI…IEWVKYNLTI (140 aa)). 2 disulfides stabilise this stretch: Cys32/Cys103 and Cys46/Cys96. N-linked (GlcNAc...) asparagine glycosylation is found at Asn60, Asn107, Asn163, Asn176, and Asn206. A helical membrane pass occupies residues 247–267 (VLSSISLACTLILLFTFGILN). Residues 268-277 (PKLNRFDKKN) are Cytoplasmic-facing. Residues 278–298 (LFFIAGVFGMSVSGVLIAANG) traverse the membrane as a helical segment. At 299-318 (SEKTVCPTPERYAVNTDRVC) the chain is on the extracellular side. Residues 319–339 (VASGFLVHFSALFAILWWTIG) traverse the membrane as a helical segment. The Cytoplasmic segment spans residues 340-359 (LADVYYGIKFVGKKIKIKVR). A helical membrane pass occupies residues 360–380 (YYLLATLTISLAFTLVPLGTG). Topologically, residues 381–400 (QYQAGLSNVMCFLKDEIYQS) are extracellular. Residues 401–421 (MTFFVPLGICLTMGTILMILV) form a helical membrane-spanning segment. Over 422-464 (MREIYVIVKSNSTSSSFSSSSSKSKSKSKSSDSISYLKLQVKP) the chain is Cytoplasmic. A helical transmembrane segment spans residues 465–485 (MLNIILFYFTFLYLFLFVRVI). Residues 486–520 (NSRYQEYEDSAIPYMLCLAKGGGDSCRLKGPSAGS) are Extracellular-facing. A helical membrane pass occupies residues 521–541 (LGYFAYCLRIYGIYLFIISFL). Topologically, residues 542-621 (SSRTIKIWKE…RNYNTDDDDL (80 aa)) are cytoplasmic. Residues 575 to 594 (FSSSKNTSTTQNSTLNNTES) show a composition bias toward low complexity. The tract at residues 575-603 (FSSSKNTSTTQNSTLNNTESDTSKRGNSS) is disordered.

Belongs to the G-protein coupled receptor Fz/Smo family.

It localises to the membrane. This is Frizzled and smoothened-like protein H (fslH) from Dictyostelium discoideum (Social amoeba).